The primary structure comprises 420 residues: Serine--tRNA ligase (420 aa).

An L-serine-binding site is contributed by 229 to 231 (TAE). An ATP-binding site is contributed by 260–262 (RSE). Glutamate 283 contributes to the L-serine binding site. ATP is bound at residue 347 to 350 (EISS). Residue serine 381 coordinates L-serine.

This sequence belongs to the class-II aminoacyl-tRNA synthetase family. Type-1 seryl-tRNA synthetase subfamily. Homodimer. The tRNA molecule binds across the dimer.

It localises to the cytoplasm. It catalyses the reaction tRNA(Ser) + L-serine + ATP = L-seryl-tRNA(Ser) + AMP + diphosphate + H(+). The catalysed reaction is tRNA(Sec) + L-serine + ATP = L-seryl-tRNA(Sec) + AMP + diphosphate + H(+). It functions in the pathway aminoacyl-tRNA biosynthesis; selenocysteinyl-tRNA(Sec) biosynthesis; L-seryl-tRNA(Sec) from L-serine and tRNA(Sec): step 1/1. Catalyzes the attachment of serine to tRNA(Ser). Is also able to aminoacylate tRNA(Sec) with serine, to form the misacylated tRNA L-seryl-tRNA(Sec), which will be further converted into selenocysteinyl-tRNA(Sec). The chain is Serine--tRNA ligase from Gluconobacter oxydans (strain 621H) (Gluconobacter suboxydans).